The following is a 733-amino-acid chain: 2'-5'-oligoadenylate synthase 2 (733 aa).

The N-myristoyl glycine moiety is linked to residue Gly2. OAS domain regions lie at residues 47–365 (VPSQ…CWDV) and 373–713 (TPSH…WKVP). The residue at position 408 (Lys408) is an N6-acetyllysine. Ser427 contacts ATP. 3 residues coordinate Mg(2+): Asp439, Asp441, and Asp510. ATP contacts are provided by Arg574 and Lys577.

It belongs to the 2-5A synthase family. In terms of assembly, homodimer. It depends on Mg(2+) as a cofactor. Post-translationally, myristoylation is not essential for its activity. Glycosylated. Glycosylation is essential for its activity.

The protein localises to the cytoplasm. Its subcellular location is the perinuclear region. The catalysed reaction is 3 ATP = 5'-triphosphoadenylyl-(2'-&gt;5')-adenylyl-(2'-&gt;5')-adenosine + 2 diphosphate. Its activity is regulated as follows. Produced as a latent enzyme which is activated by double stranded RNA (dsRNA) generated during the course of viral infection. The dsRNA activator must be at least 15 nucleotides long, and no modification of the 2'-hydroxyl group is tolerated. ssRNA or dsDNA do not act as activators. Strongly inhibited by copper, iron and zinc ions. Partially inhibited by cobalt and nickel ions. Interferon-induced, dsRNA-activated antiviral enzyme which plays a critical role in cellular innate antiviral response. Activated by detection of double stranded RNA (dsRNA): polymerizes higher oligomers of 2'-5'-oligoadenylates (2-5A) from ATP which then bind to the inactive monomeric form of ribonuclease L (RNASEL) leading to its dimerization and subsequent activation. Activation of RNASEL leads to degradation of cellular as well as viral RNA, resulting in the inhibition of protein synthesis, thus terminating viral replication. Can mediate the antiviral effect via the classical RNASEL-dependent pathway or an alternative antiviral pathway independent of RNASEL. In addition, it may also play a role in other cellular processes such as apoptosis, cell growth, differentiation and gene regulation. May act as a negative regulator of lactation, stopping lactation in virally infected mammary gland lobules, thereby preventing transmission of viruses to neonates. Non-infected lobules would not be affected, allowing efficient pup feeding during infection. The polypeptide is 2'-5'-oligoadenylate synthase 2 (Oas2) (Rattus norvegicus (Rat)).